Reading from the N-terminus, the 119-residue chain is EF-hand calcium-binding domain-containing protein 2 (119 aa).

A signal peptide spans 1–22 (MKVAVVLIVVLVVMMIGQETDS). The 36-residue stretch at 82-117 (VDDNGFVEFKATYDVDGDGVVQVEEYETVVELTENL) folds into the EF-hand domain. Asp95, Asp97, Asp99, and Glu106 together coordinate Ca(2+).

In terms of tissue distribution, component of the acid-soluble organic matrix of calcified layers of the shell (at protein level).

It localises to the secreted. The sequence is that of EF-hand calcium-binding domain-containing protein 2 from Lottia gigantea (Giant owl limpet).